Consider the following 224-residue polypeptide: Ribonuclease T (224 aa).

The 175-residue stretch at 32–206 (VVVDVETGGF…YDTEKTAELF (175 aa)) folds into the Exonuclease domain. Residues aspartate 35, glutamate 37, histidine 193, and aspartate 198 each contribute to the Mg(2+) site. Histidine 193 functions as the Proton donor/acceptor in the catalytic mechanism.

This sequence belongs to the RNase T family. As to quaternary structure, homodimer. Requires Mg(2+) as cofactor.

In terms of biological role, trims short 3' overhangs of a variety of RNA species, leaving a one or two nucleotide 3' overhang. Responsible for the end-turnover of tRNA: specifically removes the terminal AMP residue from uncharged tRNA (tRNA-C-C-A). Also appears to be involved in tRNA biosynthesis. In Pseudomonas fluorescens (strain Pf0-1), this protein is Ribonuclease T.